The chain runs to 518 residues: Serine/threonine-protein kinase UL13 (518 aa).

A disordered region spans residues 1-119 (MDESRRQRPA…QAALTAPPSS (119 aa)). Residues 151-518 (PGARSFGGSG…TNPCARHALS (368 aa)) enclose the Protein kinase domain. Residues 157-165 (GGSGGYGDV) and Lys176 contribute to the ATP site. Asp277 (proton acceptor) is an active-site residue.

The protein belongs to the protein kinase superfamily. Ser/Thr protein kinase family. Post-translationally, autophosphorylated.

It is found in the virion tegument. The protein localises to the host nucleus. The catalysed reaction is L-seryl-[protein] + ATP = O-phospho-L-seryl-[protein] + ADP + H(+). The enzyme catalyses L-threonyl-[protein] + ATP = O-phospho-L-threonyl-[protein] + ADP + H(+). In terms of biological role, multifunctional serine/threonine kinase that plays a role in several processes including egress of virus particles from the nucleus, modulation of the actin cytoskeleton and regulation of viral and cellular gene expression. Regulates the nuclear localization of viral envelopment factors UL34 and UL31, by phosphorylating the US3 kinase, indicating a role in nuclear egress. Disrupts host nuclear lamins, including LMNA and LMNB1. Phosphorylates the viral Fc receptor composed of glycoproteins E (gE) and I (gI). Phosphorylation of glycoprotein E (gE) by UL13 alters its subcellular localization, from the host early endosome to the plasma membrane. Participates in the transcriptional regulation of cellular and viral mRNAs mainly by phosphorylating the viral transcriptional regulator ICP22. Additional substrates have been identified, including UL41, UL49 or host EF1D. This chain is Serine/threonine-protein kinase UL13, found in Homo sapiens (Human).